Here is a 168-residue protein sequence, read N- to C-terminus: Protein DESIGUAL 2 (168 aa).

Positions 1-20 (MARNVGFFICILILAMDVSA) are cleaved as a signal peptide. Transmembrane regions (helical) follow at residues 56 to 76 (LAAC…GGCL), 94 to 114 (AVAS…MLIV), and 133 to 153 (VLSI…AYYI).

This sequence belongs to the DESIGUAL family. As to expression, mainly expressed in roots, inflorescences and developing leaves, and, at low levels, in mature leaves.

The protein localises to the endoplasmic reticulum membrane. Involved, partially redundantly with VCC/DEAL1 and DEAL3, to ensure bilateral symmetry development and early leaf margin patterning, probably via the regulation of auxin and CUC2 distribution. This chain is Protein DESIGUAL 2, found in Arabidopsis thaliana (Mouse-ear cress).